Consider the following 547-residue polypeptide: Zinc metalloproteinase-disintegrin-like BjussuMP-1 (547 aa).

Positions 1-133 (EFKVNGEPVV…KKASKLVVTA (133 aa)) are excised as a propeptide. One can recognise a Peptidase M12B domain in the interval 141-337 (RYVEIVVVVD…HNPQCILNEP (197 aa)). Ca(2+)-binding residues include glutamate 144 and aspartate 228. 3 disulfides stabilise this stretch: cysteine 252/cysteine 332, cysteine 292/cysteine 316, and cysteine 294/cysteine 299. Histidine 277 provides a ligand contact to Zn(2+). Glutamate 278 is an active-site residue. Zn(2+) is bound by residues histidine 281 and histidine 287. Positions 332, 335, 341, 344, 346, 348, 351, and 354 each coordinate Ca(2+). Residues 339–421 (LTVSGNELLE…DCPRNRFHRN (83 aa)) form the Disintegrin domain. 11 disulfides stabilise this stretch: cysteine 353–cysteine 363, cysteine 362–cysteine 385, cysteine 376–cysteine 382, cysteine 381–cysteine 406, cysteine 394–cysteine 413, cysteine 425–cysteine 437, cysteine 444–cysteine 494, cysteine 459–cysteine 501, cysteine 472–cysteine 482, cysteine 489–cysteine 526, and cysteine 520–cysteine 531. Asparagine 451 carries N-linked (GlcNAc...) asparagine glycosylation. Asparagine 504 is a glycosylation site (N-linked (GlcNAc...) asparagine).

It belongs to the venom metalloproteinase (M12B) family. P-III subfamily. P-IIIa sub-subfamily. As to quaternary structure, monomer. Requires Zn(2+) as cofactor. As to expression, expressed by the venom gland.

It localises to the secreted. Completely inhibited by EDTA, EGTA, 1,10-phenanthroline, and partially by beta-mercaptoethanol. Is not inhibited by aprotinin and leupeptin. Functionally, this protein is a zinc metalloprotease from snake venom that causes hemorrhage in mice after intradermal injection. It inhibits platelet aggregation induced by collagen and ADP. Has moderate edema activity, but no myotoxic activity. It hydrolyzes the Aalpha-chain and more slowly the Bbeta-chain of fibrinogen, without affecting the gamma-chains. It also shows proteolytic activity on casein. It is unable to clot plasma. It also shows bactericidal activity against E.coli and S.aureus. The chain is Zinc metalloproteinase-disintegrin-like BjussuMP-1 from Bothrops jararacussu (Jararacussu).